Consider the following 84-residue polypeptide: Small ribosomal subunit protein eS27-like (84 aa).

The span at Met-1–Lys-16 shows a compositional bias: basic and acidic residues. Positions Met-1–Arg-23 are disordered. Residues Pro-38–Ser-60 form a C4-type zinc finger.

Belongs to the eukaryotic ribosomal protein eS27 family. The cofactor is Zn(2+).

This chain is Small ribosomal subunit protein eS27-like (RPS27L), found in Bos taurus (Bovine).